Consider the following 156-residue polypeptide: Small ribosomal subunit protein uS7 (156 aa).

The protein belongs to the universal ribosomal protein uS7 family. Part of the 30S ribosomal subunit. Contacts proteins S9 and S11.

Functionally, one of the primary rRNA binding proteins, it binds directly to 16S rRNA where it nucleates assembly of the head domain of the 30S subunit. Is located at the subunit interface close to the decoding center, probably blocks exit of the E-site tRNA. This Geobacillus sp. (strain WCH70) protein is Small ribosomal subunit protein uS7.